The primary structure comprises 98 residues: Large ribosomal subunit protein bL21 (98 aa).

It belongs to the bacterial ribosomal protein bL21 family. As to quaternary structure, part of the 50S ribosomal subunit. Contacts protein L20.

In terms of biological role, this protein binds to 23S rRNA in the presence of protein L20. The polypeptide is Large ribosomal subunit protein bL21 (Aquifex aeolicus (strain VF5)).